Reading from the N-terminus, the 459-residue chain is MPLVLYNTLTRTKDVFEPLVPGHVGMYVCGPTVYDRAHIGNARPVIVFDVLYRLLKTLYPSVRYVRNITDVDDKINARAKESGEPISAITERTTAMFHEDIGALNCLLPDVEPRATAHITQMIAMIERLIAKGFAYAAEGHVLFAVGAMADYGALSRRSSDEMIAGARVEVAPYKKDPGDFVLWKPSSDDLPGWDSPWGRGRPGWHIECSAMSLQHLGETFDIHGGGQDLVFPHHENEIAQSTCANGKPFARFWLHNGWLMVEGEKMSKSLGNFFTVRDLLDQAPGEAIRLAMLTTHYHQPFDWTADGLKQAKATLDRLYTALRGVADIDANGYEGEAPLEVLAALKDDLNTPLAISHLHELAGALNKATGLEDKARRKGALLASGHLLGLLYQDPEAWFKGTGAADGPSDAEIEAAITARAEARKSRNFAEADRIRQDLAARGVVLEDGAGGTTWKRG.

Cysteine 29 contacts Zn(2+). Positions 31-41 (PTVYDRAHIGN) match the 'HIGH' region motif. The Zn(2+) site is built by cysteine 209, histidine 234, and glutamate 238. The short motif at 266–270 (KMSKS) is the 'KMSKS' region element. ATP is bound at residue lysine 269.

The protein belongs to the class-I aminoacyl-tRNA synthetase family. As to quaternary structure, monomer. It depends on Zn(2+) as a cofactor.

Its subcellular location is the cytoplasm. It carries out the reaction tRNA(Cys) + L-cysteine + ATP = L-cysteinyl-tRNA(Cys) + AMP + diphosphate. This Paramagnetospirillum magneticum (strain ATCC 700264 / AMB-1) (Magnetospirillum magneticum) protein is Cysteine--tRNA ligase.